A 361-amino-acid polypeptide reads, in one-letter code: Aromatic amino acid aminotransferase (361 aa).

K221 carries the post-translational modification N6-(pyridoxal phosphate)lysine.

This sequence belongs to the class-II pyridoxal-phosphate-dependent aminotransferase family. Homodimer. The cofactor is pyridoxal 5'-phosphate.

It catalyses the reaction an aromatic L-alpha-amino acid + 2-oxoglutarate = an aromatic oxo-acid + L-glutamate. Aminotransferase that catalyzes the conversion of aromatic amino acids and 2-oxoglutarate into corresponding aromatic oxo acids and L-glutamate. In Mycobacterium ulcerans (strain Agy99), this protein is Aromatic amino acid aminotransferase.